A 1798-amino-acid chain; its full sequence is Non-reducing polyketide synthase nscA (1798 aa).

The segment at 25–256 (RRLDQHSKDR…PLPVYDGLCH (232 aa)) is N-terminal acylcarrier protein transacylase domain (SAT). A Ketosynthase family 3 (KS3) domain is found at 392 to 825 (SSKLAIVGMA…GGNTTLLLED (434 aa)). Residues Cys-565, His-700, and His-743 each act as for beta-ketoacyl synthase activity in the active site. Residues 931 to 1224 (FTGQGAYYHG…LVRSMIPSAP (294 aa)) form a malonyl-CoA:ACP transacylase (MAT) domain region. Residues 1322 to 1458 (HQITAETVRT…ATILFEDPGA (137 aa)) form an N-terminal hotdog fold region. In terms of domain architecture, PKS/mFAS DH spans 1322–1632 (HQITAETVRT…FRRVPRLLMD (311 aa)). His-1354 serves as the catalytic Proton acceptor; for dehydratase activity. The segment at 1390–1628 (HMNLTDVEVL…GMIRFRRVPR (239 aa)) is product template (PT) domain. Residues 1486 to 1632 (ASRLSKPLAY…FRRVPRLLMD (147 aa)) are C-terminal hotdog fold. The active-site Proton donor; for dehydratase activity is Asp-1543. The segment at 1695 to 1721 (LLATSSGDSTPKEPPIVTPAESERAGP) is disordered. One can recognise a Carrier domain in the interval 1721 to 1798 (PVDNNMISQC…EMTAWIEEYC (78 aa)). Ser-1758 bears the O-(pantetheine 4'-phosphoryl)serine mark.

Pantetheine 4'-phosphate is required as a cofactor.

The protein operates within secondary metabolite biosynthesis. Functionally, non-reducing polyketide synthase; part of the gene cluster that mediates the biosynthesis of neosartoricin B, a prenylated anthracenone that probably exhibits T-cell antiproliferative activity, suggestive of a physiological role as an immunosuppressive agent. The non-reducing polyketide synthase nscA probably synthesizes and cyclizes the decaketide backbone. The hydrolase nscB then mediates the product release through hydrolysis followed by spontaneous decarboxylation. The prenyltransferase nscD catalyzes the addition of the dimethylallyl group to the aromatic C5. The FAD-dependent monooxygenase nscC is then responsible for the stereospecific hydroxylation at C2. Neosartoricin B can be converted into two additional compounds neosartoricins C and D. Neosartoricin C is a spirocyclic compound that is cyclized through the attack of C3 hydroxyl on C14, followed by dehydration. On the other hand, neosartoricin D is a further cyclized compound in which attack of C2 on C14 in neosartoricin C results in the formation of the acetal-containing dioxabicyclo-octanone ring. Both of these compounds are novel and possibly represent related metabolites of the gene cluster. This chain is Non-reducing polyketide synthase nscA, found in Trichophyton rubrum (strain ATCC MYA-4607 / CBS 118892) (Athlete's foot fungus).